Reading from the N-terminus, the 835-residue chain is Neuroligin-2 (835 aa).

An N-terminal signal peptide occupies residues 1–14 (MWLLALCLVGLAGA). Over 15-677 (QRGGGGPGGG…DSRDYSTELS (663 aa)) the chain is Extracellular. Residues asparagine 98 and asparagine 136 are each glycosylated (N-linked (GlcNAc...) asparagine). 3 disulfide bridges follow: cysteine 106-cysteine 141, cysteine 317-cysteine 328, and cysteine 487-cysteine 521. An N-linked (GlcNAc...) asparagine glycan is attached at asparagine 522. The disordered stretch occupies residues 623-668 (PPYATRWPPRPPAGAPGTRRPPPPATLPPEPEPEPGPRAYDRFPGD). Over residues 630–658 (PPRPPAGAPGTRRPPPPATLPPEPEPEPG) the composition is skewed to pro residues. Residues 678 to 698 (VTVAVGASLLFLNILAFAALY) form a helical membrane-spanning segment. The tract at residues 678-698 (VTVAVGASLLFLNILAFAALY) is required for interaction with LHFPL4. The Cytoplasmic segment spans residues 699-835 (YKRDRRQELR…LPHPHSTTRV (137 aa)). Phosphoserine is present on residues serine 713 and serine 718. The disordered stretch occupies residues 790–835 (LLPSGLGPPPPPPPPSLHPFGPFPPPPPTATSHNNTLPHPHSTTRV). The segment covering 795 to 818 (LGPPPPPPPPSLHPFGPFPPPPPT) has biased composition (pro residues). A compositionally biased stretch (polar residues) spans 823 to 835 (NNTLPHPHSTTRV).

This sequence belongs to the type-B carboxylesterase/lipase family. Interacts with neurexins NRXN1, NRXN2 and NRXN3. Interaction with neurexins is mediated by heparan sulfate glycan modification on neurexin. Interacts (via its C-terminus) with DLG4/PSD-95 (via PDZ domain 3). Interacts with PATJ. Interacts with GPHN. Interacts with MDGA1 and MDGA2. Found in a complex with MAGI2 and IGSF9B, where it interacts with MAGI2 (via WW 1, WW 2 and PDZ 2 domains). Identified in a complex of 720 kDa composed of LHFPL4, NLGN2, GABRA1, GABRB2, GABRG2 and GABRB3. Interacts with LHFPL4; leading to mutual regulation of the protein level and synaptic clustering. Interacts with NLGN2. Expressed in the blood vessel walls. Detected in colon, brain and pancreas islets of Langerhans (at protein level). Detected in brain, and at lower levels in pancreas islet beta cells.

The protein localises to the cell membrane. Its subcellular location is the postsynaptic cell membrane. The protein resides in the presynaptic cell membrane. Transmembrane scaffolding protein involved in cell-cell interactions via its interactions with neurexin family members. Mediates cell-cell interactions both in neurons and in other types of cells, such as Langerhans beta cells. Plays a role in synapse function and synaptic signal transmission, especially via gamma-aminobutyric acid receptors (GABA(A) receptors). Functions by recruiting and clustering synaptic proteins. Promotes clustering of postsynaptic GABRG2 and GPHN. Promotes clustering of postsynaptic LHFPL4. Modulates signaling by inhibitory synapses, and thereby plays a role in controlling the ratio of signaling by excitatory and inhibitory synapses and information processing. Required for normal signal amplitude from inhibitory synapses, but is not essential for normal signal frequency. May promote the initial formation of synapses, but is not essential for this. In vitro, triggers the de novo formation of presynaptic structures. Mediates cell-cell interactions between Langerhans beta cells and modulates insulin secretion. This Homo sapiens (Human) protein is Neuroligin-2 (NLGN2).